The primary structure comprises 274 residues: Ethanolamine ammonia-lyase small subunit (274 aa).

3 residues coordinate adenosylcob(III)alamin: valine 161, glutamate 182, and cysteine 211.

It belongs to the EutC family. In terms of assembly, the basic unit is a heterodimer which dimerizes to form tetramers. The heterotetramers trimerize; 6 large subunits form a core ring with 6 small subunits projecting outwards. Requires adenosylcob(III)alamin as cofactor.

The protein localises to the bacterial microcompartment. It catalyses the reaction ethanolamine = acetaldehyde + NH4(+). It participates in amine and polyamine degradation; ethanolamine degradation. Functionally, catalyzes the deamination of various vicinal amino-alcohols to oxo compounds. Allows this organism to utilize ethanolamine as the sole source of nitrogen and carbon in the presence of external vitamin B12. The sequence is that of Ethanolamine ammonia-lyase small subunit from Pseudomonas fluorescens (strain Pf0-1).